A 140-amino-acid chain; its full sequence is Large ribosomal subunit protein bL17 (140 aa).

This sequence belongs to the bacterial ribosomal protein bL17 family. In terms of assembly, part of the 50S ribosomal subunit. Contacts protein L32.

The protein is Large ribosomal subunit protein bL17 of Hyphomonas neptunium (strain ATCC 15444).